The chain runs to 493 residues: Probable mannosyl-oligosaccharide alpha-1,2-mannosidase 1B (493 aa).

The first 18 residues, methionine 1–alanine 18, serve as a signal peptide directing secretion. N-linked (GlcNAc...) asparagine glycans are attached at residues asparagine 87 and asparagine 174. A disulfide bridge links cysteine 324 with cysteine 353. Glutamate 367 functions as the Proton donor in the catalytic mechanism. An N-linked (GlcNAc...) asparagine glycan is attached at asparagine 489.

It belongs to the glycosyl hydrolase 47 family. In terms of assembly, monomer. Ca(2+) serves as cofactor. The cofactor is Mg(2+).

Its subcellular location is the cytoplasmic vesicle lumen. The catalysed reaction is N(4)-(alpha-D-Man-(1-&gt;2)-alpha-D-Man-(1-&gt;2)-alpha-D-Man-(1-&gt;3)-[alpha-D-Man-(1-&gt;2)-alpha-D-Man-(1-&gt;3)-[alpha-D-Man-(1-&gt;2)-alpha-D-Man-(1-&gt;6)]-alpha-D-Man-(1-&gt;6)]-beta-D-Man-(1-&gt;4)-beta-D-GlcNAc-(1-&gt;4)-beta-D-GlcNAc)-L-asparaginyl-[protein] (N-glucan mannose isomer 9A1,2,3B1,2,3) + 4 H2O = N(4)-(alpha-D-Man-(1-&gt;3)-[alpha-D-Man-(1-&gt;3)-[alpha-D-Man-(1-&gt;6)]-alpha-D-Man-(1-&gt;6)]-beta-D-Man-(1-&gt;4)-beta-D-GlcNAc-(1-&gt;4)-beta-D-GlcNAc)-L-asparaginyl-[protein] (N-glucan mannose isomer 5A1,2) + 4 beta-D-mannose. It catalyses the reaction N(4)-(alpha-D-Man-(1-&gt;2)-alpha-D-Man-(1-&gt;2)-alpha-D-Man-(1-&gt;3)-[alpha-D-Man-(1-&gt;3)-[alpha-D-Man-(1-&gt;2)-alpha-D-Man-(1-&gt;6)]-alpha-D-Man-(1-&gt;6)]-beta-D-Man-(1-&gt;4)-beta-D-GlcNAc-(1-&gt;4)-beta-D-GlcNAc)-L-asparaginyl-[protein] (N-glucan mannose isomer 8A1,2,3B1,3) + 3 H2O = N(4)-(alpha-D-Man-(1-&gt;3)-[alpha-D-Man-(1-&gt;3)-[alpha-D-Man-(1-&gt;6)]-alpha-D-Man-(1-&gt;6)]-beta-D-Man-(1-&gt;4)-beta-D-GlcNAc-(1-&gt;4)-beta-D-GlcNAc)-L-asparaginyl-[protein] (N-glucan mannose isomer 5A1,2) + 3 beta-D-mannose. Its pathway is protein modification; protein glycosylation. In terms of biological role, involved in the maturation of Asn-linked oligosaccharides. Progressively trims alpha-1,2-linked mannose residues from Man(9)GlcNAc(2) to produce Man(5)GlcNAc(2). This chain is Probable mannosyl-oligosaccharide alpha-1,2-mannosidase 1B (mns1B), found in Aspergillus fumigatus (strain CBS 144.89 / FGSC A1163 / CEA10) (Neosartorya fumigata).